The primary structure comprises 475 residues: Adenylyl cyclase-associated protein 1 (475 aa).

An N-acetylalanine modification is found at alanine 2. The residue at position 31 (tyrosine 31) is a Phosphotyrosine. Serine 34 carries the phosphoserine modification. An N6-acetyllysine modification is found at lysine 81. 2 disordered regions span residues 216-237 (ELSG…PPCP) and 278-319 (MKTH…KKEP). Residues 218–228 (SGLPSGPSAGS) show a composition bias toward low complexity. At lysine 287 the chain carries N6-methyllysine. 3 positions are modified to phosphoserine: serine 290, serine 295, and serine 301. Residue threonine 307 is modified to Phosphothreonine. Residues serine 308 and serine 310 each carry the phosphoserine modification. Residues 319-453 (PAVLELEGKK…EGGDFNEFPV (135 aa)) form the C-CAP/cofactor C-like domain. Residue lysine 348 forms a Glycyl lysine isopeptide (Lys-Gly) (interchain with G-Cter in SUMO1) linkage.

This sequence belongs to the CAP family. Homodimer. Binds actin monomers.

It is found in the cell membrane. Its function is as follows. Directly regulates filament dynamics and has been implicated in a number of complex developmental and morphological processes, including mRNA localization and the establishment of cell polarity. The polypeptide is Adenylyl cyclase-associated protein 1 (CAP1) (Homo sapiens (Human)).